The following is a 135-amino-acid chain: Phosphoinositide-interacting protein (135 aa).

A disordered region spans residues 1–21; the sequence is MEVLPKALEVDERSPESKDLL. Residues 8 to 19 show a composition bias toward basic and acidic residues; it reads LEVDERSPESKD. The next 2 helical transmembrane spans lie at 54 to 74 and 92 to 112; these read IIIM…TCVA and PAFL…VPII.

Interacts with TRPV1. As to expression, strongly expressed in most dorsal root ganglia (DRG) and trigeminal neurons. Expressed by most peptidergic (CGRP+) and non-peptidergic (IB4+) DRG neurons. Weakly expressed in other parts of the peripheral nervous system (PNS) including sympathetic and enteric neurons. Not expressed in the spinal cord.

The protein resides in the membrane. Regulatory subunit of TRPV1, a molecular sensor of noxious heat and capsaicin. Positively regulates TRPV1 channel activity via phosphatidylinositol 4,5-bisphosphate (PIP2). Binds various phosphoinositide, including phosphatidylinositol 4,5-bisphosphate (PIP2), but not phosphatidylinositol (PI). This chain is Phosphoinositide-interacting protein (Pirt), found in Mus musculus (Mouse).